Here is a 268-residue protein sequence, read N- to C-terminus: Mediator of RNA polymerase II transcription subunit 18 (268 aa).

This sequence belongs to the Mediator complex subunit 18 family. Component of the Mediator complex.

It is found in the nucleus. Functionally, component of the Mediator complex, a coactivator involved in the regulated transcription of nearly all RNA polymerase II-dependent genes. Mediator functions as a bridge to convey information from gene-specific regulatory proteins to the basal RNA polymerase II transcription machinery. Mediator is recruited to promoters by direct interactions with regulatory proteins and serves as a scaffold for the assembly of a functional preinitiation complex with RNA polymerase II and the general transcription factors. The polypeptide is Mediator of RNA polymerase II transcription subunit 18 (srb5) (Neosartorya fischeri (strain ATCC 1020 / DSM 3700 / CBS 544.65 / FGSC A1164 / JCM 1740 / NRRL 181 / WB 181) (Aspergillus fischerianus)).